The chain runs to 329 residues: MDPQCTMGLSNILFVMAFLLSGAAPLKIQAYFNETADLPCQFANSQNQSLSELVVFWQDQENLVLNEVYLGKEKFDSVHSKYMGRTSFDSDSWTLRLHNLQIKDKGLYQCIIHHKKPTGMIRIHQMNSELSVLANFSQPEIVPISNITENVYINLTCSSIHGYPEPKKMSVLLRTKNSTIEYDGVMQKSQDNVTELYDVSISLSVSFPDVTSNMTIFCILETDKTRLLSSPFSIELEDPQPPPDHIPWITAVLPTVIICVMVFCLILWKWKKKKRPRNSYKCGTNTMEREESEQTKKREKIHIPERSDEAQRVFKSSKTSSCDKSDTCF.

Residues 1–23 (MDPQCTMGLSNILFVMAFLLSGA) form the signal peptide. Topologically, residues 24–247 (APLKIQAYFN…DPQPPPDHIP (224 aa)) are extracellular. N-linked (GlcNAc...) asparagine glycans are attached at residues Asn33, Asn47, Asn135, Asn146, Asn154, Asn177, Asn192, and Asn213. Residues 33-131 (NETADLPCQF…RIHQMNSELS (99 aa)) form the Ig-like V-type domain. Cys40 and Cys110 are oxidised to a cystine. The 76-residue stretch at 150 to 225 (NVYINLTCSS…IFCILETDKT (76 aa)) folds into the Ig-like C2-type domain. A disulfide bridge links Cys157 with Cys218. A helical membrane pass occupies residues 248 to 268 (WITAVLPTVIICVMVFCLILW). Residues 269–329 (KWKKKKRPRN…SSCDKSDTCF (61 aa)) are Cytoplasmic-facing. The tract at residues 277–329 (RNSYKCGTNTMEREESEQTKKREKIHIPERSDEAQRVFKSSKTSSCDKSDTCF) is disordered. Positions 287-312 (MEREESEQTKKREKIHIPERSDEAQR) are enriched in basic and acidic residues.

In terms of assembly, homodimer. Interacts with MARCH8. Interacts (via cytoplasmic domain) with PHB1 and PHB2; the interactions increases after priming with CD40. Interacts with CD28. As to quaternary structure, (Microbial infection) Interacts with adenovirus subgroup b fiber protein. (Microbial infection) Interacts with Orthopoxvirus OPG038/M2 protein, inhibiting the interaction with CTLA4 and CD28. Polyubiquitinated; which is promoted by MARCH8 and results in endocytosis and lysosomal degradation. As to expression, expressed by activated B-lymphocytes and monocytes.

It localises to the cell membrane. Its function is as follows. Receptor involved in the costimulatory signal essential for T-lymphocyte proliferation and interleukin-2 production, by binding CD28 or CTLA-4. May play a critical role in the early events of T-cell activation and costimulation of naive T-cells, such as deciding between immunity and anergy that is made by T-cells within 24 hours after activation. Also involved in the regulation of B cells function, plays a role in regulating the level of IgG(1) produced. Upon CD40 engagement, activates NF-kappa-B signaling pathway via phospholipase C and protein kinase C activation. In terms of biological role, interferes with the formation of CD86 clusters, and thus acts as a negative regulator of T-cell activation. Functionally, (Microbial infection) Acts as a receptor for adenovirus subgroup B. The sequence is that of T-lymphocyte activation antigen CD86 (CD86) from Homo sapiens (Human).